The following is a 354-amino-acid chain: Phosphoribosylformylglycinamidine cyclo-ligase (354 aa).

Belongs to the AIR synthase family.

It localises to the cytoplasm. The enzyme catalyses 2-formamido-N(1)-(5-O-phospho-beta-D-ribosyl)acetamidine + ATP = 5-amino-1-(5-phospho-beta-D-ribosyl)imidazole + ADP + phosphate + H(+). The protein operates within purine metabolism; IMP biosynthesis via de novo pathway; 5-amino-1-(5-phospho-D-ribosyl)imidazole from N(2)-formyl-N(1)-(5-phospho-D-ribosyl)glycinamide: step 2/2. The sequence is that of Phosphoribosylformylglycinamidine cyclo-ligase from Marinobacter nauticus (strain ATCC 700491 / DSM 11845 / VT8) (Marinobacter aquaeolei).